Reading from the N-terminus, the 73-residue chain is UPF0337 protein lp_1708 (73 aa).

Composition is skewed to basic and acidic residues over residues 1-35 (MSDVNKKFDSKKDQLSGKAKEVEGKVTGDRAREAQ) and 44-73 (KAKDKLADAEETVKGVVDEAKDKMKKKSDD). The disordered stretch occupies residues 1 to 73 (MSDVNKKFDS…KDKMKKKSDD (73 aa)).

It belongs to the UPF0337 (CsbD) family.

This is UPF0337 protein lp_1708 from Lactiplantibacillus plantarum (strain ATCC BAA-793 / NCIMB 8826 / WCFS1) (Lactobacillus plantarum).